Here is a 382-residue protein sequence, read N- to C-terminus: Putative oxidoreductase C1F5.03c (382 aa).

The helical transmembrane segment at 7–27 threads the bilayer; sequence IVIVGGGITGVSCLYFLAHHP.

It belongs to the TDA3 family.

It is found in the cytoplasm. The protein resides in the membrane. Putative oxidoreductase that negatively regulates the retrieval of cargo from late endosomes to the Golgi. The chain is Putative oxidoreductase C1F5.03c from Schizosaccharomyces pombe (strain 972 / ATCC 24843) (Fission yeast).